The primary structure comprises 100 residues: Protein alpha-2 (100 aa).

The protein is Protein alpha-2 of Bos taurus (Bovine).